The primary structure comprises 296 residues: Small ribosomal subunit protein uS2 (296 aa).

The interval 246-272 (QAKDGSVVDSGKGKSIAAHKGGGKASK) is disordered.

It belongs to the universal ribosomal protein uS2 family.

The sequence is that of Small ribosomal subunit protein uS2 from Anaplasma phagocytophilum (strain HZ).